A 496-amino-acid polypeptide reads, in one-letter code: Glycylpeptide N-tetradecanoyltransferase 1 (496 aa).

The interval 1–82 (MADESETAVK…SAQDQPVKMN (82 aa)) is disordered. Phosphoserine is present on residues Ser31 and Ser47. Basic residues predominate over residues 55–66 (KKKKKKQKKKKE). Ser83 is subject to Phosphoserine. The tetradecanoyl-CoA site is built by Gln118, Phe119, Trp120, Phe247, Leu248, Cys249, Val250, Ser256, Arg258, Val259, and Ala260.

The protein belongs to the NMT family.

It localises to the cytoplasm. It is found in the cytosol. Its subcellular location is the membrane. It carries out the reaction N-terminal glycyl-[protein] + tetradecanoyl-CoA = N-tetradecanoylglycyl-[protein] + CoA + H(+). It catalyses the reaction N-terminal glycyl-L-lysyl-[protein] + tetradecanoyl-CoA = N-terminal glycyl-(N(6)-tetradecanoyl)-L-lysyl-[protein] + CoA + H(+). Functionally, adds a myristoyl group to the N-terminal glycine residue of certain cellular and viral proteins. Also able to mediate N-terminal lysine myristoylation of proteins: catalyzes myristoylation of ARF6 on both 'Gly-2' and 'Lys-3'. Lysine myristoylation is required to maintain ARF6 on membranes during the GTPase cycle. This is Glycylpeptide N-tetradecanoyltransferase 1 (NMT1) from Pongo abelii (Sumatran orangutan).